We begin with the raw amino-acid sequence, 481 residues long: Beta-1,3-glucan-binding protein (481 aa).

The signal sequence occupies residues 1 to 17; the sequence is MKVLVVFIFCLVRSTFG. The 105-residue stretch at 19–123 folds into the CBM39 domain; that stretch reads FEVPDALVEV…QKFVVKQLLD (105 aa). A GH16 domain is found at 211 to 481; that stretch reads HRLTIRPVPS…EVDYVKVSAL (271 aa). N-linked (GlcNAc...) asparagine glycosylation occurs at Asn467.

This sequence belongs to the insect beta-1,3-glucan binding protein family. In terms of processing, the N-terminus is blocked. Hemolymph.

It localises to the secreted. Functionally, involved in the recognition of invading microorganisms. Binds specifically to beta-1,3-glucan and activates the phenoloxidase cascade. In Tenebrio molitor (Yellow mealworm beetle), this protein is Beta-1,3-glucan-binding protein (GRP).